The primary structure comprises 178 residues: Large ribosomal subunit protein uL10 (178 aa).

Belongs to the universal ribosomal protein uL10 family. As to quaternary structure, part of the ribosomal stalk of the 50S ribosomal subunit. The N-terminus interacts with L11 and the large rRNA to form the base of the stalk. The C-terminus forms an elongated spine to which L12 dimers bind in a sequential fashion forming a multimeric L10(L12)X complex.

Forms part of the ribosomal stalk, playing a central role in the interaction of the ribosome with GTP-bound translation factors. This is Large ribosomal subunit protein uL10 from Petrotoga mobilis (strain DSM 10674 / SJ95).